The chain runs to 114 residues: Immunoglobulin kappa variable 6D-21 (114 aa).

Residues 1 to 19 (MSPSQLIGFLLLWVPASRG) form the signal peptide. Residues 20-42 (EIVLTQSPDFQSVTPKEKVTITC) form a framework-1 region. The 95-residue stretch at 20 to 114 (EIVLTQSPDF…YYCHQSSSLP (95 aa)) folds into the Ig-like domain. Cys42 and Cys107 form a disulfide bridge. The complementarity-determining-1 stretch occupies residues 43–53 (RASQSIGSSLH). Residues 54 to 68 (WYQQKPDQSPKLLIK) are framework-2. Positions 69–75 (YASQSIS) are complementarity-determining-2. The segment at 76–107 (GVPSRFSGSGSGTDFTLTINSLEAEDAAAYYC) is framework-3. The complementarity-determining-3 stretch occupies residues 108-114 (HQSSSLP).

Immunoglobulins are composed of two identical heavy chains and two identical light chains; disulfide-linked.

The protein resides in the secreted. It is found in the cell membrane. Its function is as follows. V region of the variable domain of immunoglobulin light chains that participates in the antigen recognition. Immunoglobulins, also known as antibodies, are membrane-bound or secreted glycoproteins produced by B lymphocytes. In the recognition phase of humoral immunity, the membrane-bound immunoglobulins serve as receptors which, upon binding of a specific antigen, trigger the clonal expansion and differentiation of B lymphocytes into immunoglobulins-secreting plasma cells. Secreted immunoglobulins mediate the effector phase of humoral immunity, which results in the elimination of bound antigens. The antigen binding site is formed by the variable domain of one heavy chain, together with that of its associated light chain. Thus, each immunoglobulin has two antigen binding sites with remarkable affinity for a particular antigen. The variable domains are assembled by a process called V-(D)-J rearrangement and can then be subjected to somatic hypermutations which, after exposure to antigen and selection, allow affinity maturation for a particular antigen. The chain is Immunoglobulin kappa variable 6D-21 from Homo sapiens (Human).